A 388-amino-acid polypeptide reads, in one-letter code: Succinyl-diaminopimelate desuccinylase (388 aa).

His-84 contributes to the Zn(2+) binding site. Asp-86 is an active-site residue. Asp-115 contacts Zn(2+). Glu-146 acts as the Proton acceptor in catalysis. The Zn(2+) site is built by Glu-147, Glu-175, and His-360.

Belongs to the peptidase M20A family. DapE subfamily. In terms of assembly, homodimer. Zn(2+) is required as a cofactor. Requires Co(2+) as cofactor.

The catalysed reaction is N-succinyl-(2S,6S)-2,6-diaminopimelate + H2O = (2S,6S)-2,6-diaminopimelate + succinate. It participates in amino-acid biosynthesis; L-lysine biosynthesis via DAP pathway; LL-2,6-diaminopimelate from (S)-tetrahydrodipicolinate (succinylase route): step 3/3. Catalyzes the hydrolysis of N-succinyl-L,L-diaminopimelic acid (SDAP), forming succinate and LL-2,6-diaminopimelate (DAP), an intermediate involved in the bacterial biosynthesis of lysine and meso-diaminopimelic acid, an essential component of bacterial cell walls. This is Succinyl-diaminopimelate desuccinylase from Helicobacter pylori (strain J99 / ATCC 700824) (Campylobacter pylori J99).